We begin with the raw amino-acid sequence, 62 residues long: Large ribosomal subunit protein bL28 (62 aa).

The protein belongs to the bacterial ribosomal protein bL28 family.

The sequence is that of Large ribosomal subunit protein bL28 from Thermoanaerobacter sp. (strain X514).